Here is a 713-residue protein sequence, read N- to C-terminus: Polyribonucleotide nucleotidyltransferase (713 aa).

Mg(2+) contacts are provided by D495 and D501. The KH domain maps to 562–621 (PRLLTLKIPVDMIGLVIGPGGKTIKRIVEETGAKVDIEDDGTVVVSSIDGAKALAAKQII). The 70-residue stretch at 631 to 700 (DKVYLGTVTR…QKGRINLTRR (70 aa)) folds into the S1 motif domain.

Belongs to the polyribonucleotide nucleotidyltransferase family. Mg(2+) serves as cofactor.

It localises to the cytoplasm. The enzyme catalyses RNA(n+1) + phosphate = RNA(n) + a ribonucleoside 5'-diphosphate. Its function is as follows. Involved in mRNA degradation. Catalyzes the phosphorolysis of single-stranded polyribonucleotides processively in the 3'- to 5'-direction. The sequence is that of Polyribonucleotide nucleotidyltransferase from Gloeobacter violaceus (strain ATCC 29082 / PCC 7421).